We begin with the raw amino-acid sequence, 606 residues long: Limonene synthase, chloroplastic (606 aa).

Residues 1–38 constitute a chloroplast transit peptide; that stretch reads MAIINLPVPTNSSSEVNKHNHLRSCLPSGRATFTTLSA. Residues R320, D357, D361, R497, and D500 each contribute to the (2E)-geranyl diphosphate site. Mg(2+) is bound by residues D357 and D361. The DDXXD motif motif lies at 357–361; the sequence is DDIYD. Mg(2+) contacts are provided by D500, T504, and E508.

The protein belongs to the terpene synthase family. Tpsb subfamily. In terms of assembly, monomer. It depends on Mg(2+) as a cofactor. Requires Mn(2+) as cofactor. In terms of tissue distribution, confined to fruits.

Its subcellular location is the plastid. The protein resides in the chloroplast. The catalysed reaction is (2E,6E)-farnesyl diphosphate = (E)-beta-farnesene + diphosphate. It carries out the reaction (2E)-geranyl diphosphate = limonene + diphosphate. The enzyme catalyses (2E)-geranyl diphosphate = beta-pinene + diphosphate. It catalyses the reaction (2E)-geranyl diphosphate = sabinene + diphosphate. The catalysed reaction is (2E)-geranyl diphosphate = beta-myrcene + diphosphate. It carries out the reaction (2E)-geranyl diphosphate = alpha-pinene + diphosphate. The enzyme catalyses (2E)-geranyl diphosphate = terpinolene + diphosphate. It functions in the pathway secondary metabolite biosynthesis; terpenoid biosynthesis. Its function is as follows. Monoterpene synthase (mono-TPS) involved in the biosynthesis of monoterpenes natural products, constituent of coffee beverage aroma. Catalyzes the conversion of (2E)-geranyl diphosphate (GPP) into limonene, beta-pinene, sabinene and beta-myrcene, and, as minor products, alpha-pinene and alpha-terpinolene. Can also, with a low efficiency, use farnesyl pyrophosphate (FPP) as substrate to produce beta-farnesene. Not able to use geranylgeranyl pyrophosphate (GGPP) as substrate. This chain is Limonene synthase, chloroplastic, found in Coffea arabica (Arabian coffee).